Consider the following 240-residue polypeptide: tRNA (guanine-N(1)-)-methyltransferase (240 aa).

S-adenosyl-L-methionine is bound by residues Gly111 and 130–135 (IGDYVI).

This sequence belongs to the RNA methyltransferase TrmD family. Homodimer.

The protein resides in the cytoplasm. It carries out the reaction guanosine(37) in tRNA + S-adenosyl-L-methionine = N(1)-methylguanosine(37) in tRNA + S-adenosyl-L-homocysteine + H(+). Specifically methylates guanosine-37 in various tRNAs. The polypeptide is tRNA (guanine-N(1)-)-methyltransferase (Mycoplasma mycoides subsp. mycoides SC (strain CCUG 32753 / NCTC 10114 / PG1)).